The chain runs to 160 residues: MGVFNYESETTSVIPAARLFKAFILEGDNLIPKVAPQAISSVENIEGNGGPGTIKKINFPEGFPFKYVKDRVDEVDHTNFKYNYSVIEGGPVGDTLEKISNEIKIVATPDGGCVLKISNKYHTKGNHEVKAEQVKASKEMGETLLRAVESYLLAHSDAYN.

The brassinolide site is built by lysine 55, tyrosine 82, tyrosine 84, and asparagine 101.

The protein belongs to the BetVI family.

The protein localises to the cytoplasm. May be a general steroid carrier protein. This chain is Major pollen allergen Bet v 1-G (BETV1G), found in Betula pendula (European white birch).